The chain runs to 204 residues: Holliday junction branch migration complex subunit RuvA (204 aa).

The domain I stretch occupies residues 1-64 (MIGKLKGTID…EDQLKLFGFM (64 aa)). Residues 65-143 (TALEREWFNL…AFAGEAINIG (79 aa)) are domain II. A flexible linker region spans residues 144–151 (LKQELGEG). Residues 152-204 (VAAAPVADAVSALTNLGYSRDQAANAIAAAMKTAGEGADSAKLIRLGLKELAR) form a domain III region.

It belongs to the RuvA family. As to quaternary structure, homotetramer. Forms an RuvA(8)-RuvB(12)-Holliday junction (HJ) complex. HJ DNA is sandwiched between 2 RuvA tetramers; dsDNA enters through RuvA and exits via RuvB. An RuvB hexamer assembles on each DNA strand where it exits the tetramer. Each RuvB hexamer is contacted by two RuvA subunits (via domain III) on 2 adjacent RuvB subunits; this complex drives branch migration. In the full resolvosome a probable DNA-RuvA(4)-RuvB(12)-RuvC(2) complex forms which resolves the HJ.

The protein resides in the cytoplasm. In terms of biological role, the RuvA-RuvB-RuvC complex processes Holliday junction (HJ) DNA during genetic recombination and DNA repair, while the RuvA-RuvB complex plays an important role in the rescue of blocked DNA replication forks via replication fork reversal (RFR). RuvA specifically binds to HJ cruciform DNA, conferring on it an open structure. The RuvB hexamer acts as an ATP-dependent pump, pulling dsDNA into and through the RuvAB complex. HJ branch migration allows RuvC to scan DNA until it finds its consensus sequence, where it cleaves and resolves the cruciform DNA. The sequence is that of Holliday junction branch migration complex subunit RuvA from Rhizobium johnstonii (strain DSM 114642 / LMG 32736 / 3841) (Rhizobium leguminosarum bv. viciae).